A 784-amino-acid chain; its full sequence is LPS-assembly protein LptD (784 aa).

The first 24 residues, 1–24 (MKKRIPTLLATMIATALYSQQGLA), serve as a signal peptide directing secretion. Intrachain disulfides connect Cys-31–Cys-724 and Cys-173–Cys-725.

The protein belongs to the LptD family. In terms of assembly, component of the lipopolysaccharide transport and assembly complex. Interacts with LptE and LptA. Post-translationally, contains two intramolecular disulfide bonds.

The protein resides in the cell outer membrane. In terms of biological role, together with LptE, is involved in the assembly of lipopolysaccharide (LPS) at the surface of the outer membrane. The polypeptide is LPS-assembly protein LptD (Shigella flexneri).